A 514-amino-acid polypeptide reads, in one-letter code: Ribonuclease Y (514 aa).

The helical transmembrane segment at 2-22 (EDLIVAIVVGAFSSAISIFVV) threads the bilayer. The region spanning 204–268 (LINNIPLNDE…VATKTIRELL (65 aa)) is the KH domain. Residues 330-423 (ALAHTLEVAH…VCAADALSAA (94 aa)) form the HD domain.

It belongs to the RNase Y family.

The protein localises to the cell membrane. In terms of biological role, endoribonuclease that initiates mRNA decay. The chain is Ribonuclease Y from Aliarcobacter butzleri (strain RM4018) (Arcobacter butzleri).